The sequence spans 200 residues: Holliday junction branch migration complex subunit RuvA (200 aa).

Residues 1–63 (MYAYVKGKLT…EDAQLLYGFS (63 aa)) form a domain I region. The segment at 64 to 142 (SEEEKDMFLS…ITEEDSDSLL (79 aa)) is domain II. The flexible linker stretch occupies residues 143–149 (QVDATST). The interval 150-200 (VQDQFVQEAMLALEALGYSKRELAKVEKTLNKNKYDSVDEAVKAGLQLVVS) is domain III.

This sequence belongs to the RuvA family. In terms of assembly, homotetramer. Forms an RuvA(8)-RuvB(12)-Holliday junction (HJ) complex. HJ DNA is sandwiched between 2 RuvA tetramers; dsDNA enters through RuvA and exits via RuvB. An RuvB hexamer assembles on each DNA strand where it exits the tetramer. Each RuvB hexamer is contacted by two RuvA subunits (via domain III) on 2 adjacent RuvB subunits; this complex drives branch migration. In the full resolvosome a probable DNA-RuvA(4)-RuvB(12)-RuvC(2) complex forms which resolves the HJ.

It is found in the cytoplasm. The RuvA-RuvB-RuvC complex processes Holliday junction (HJ) DNA during genetic recombination and DNA repair, while the RuvA-RuvB complex plays an important role in the rescue of blocked DNA replication forks via replication fork reversal (RFR). RuvA specifically binds to HJ cruciform DNA, conferring on it an open structure. The RuvB hexamer acts as an ATP-dependent pump, pulling dsDNA into and through the RuvAB complex. HJ branch migration allows RuvC to scan DNA until it finds its consensus sequence, where it cleaves and resolves the cruciform DNA. This chain is Holliday junction branch migration complex subunit RuvA, found in Staphylococcus aureus (strain USA300).